The primary structure comprises 111 residues: Repressed By RIM101 protein 1 (111 aa).

Residues 1 to 19 (MKFSTTLLALTASIAAVMS) form the signal peptide. Positions 71-90 (SGASSATGGSSAAKSGSSSG) are disordered. Residue Ser-81 is the site of GPI-anchor amidated serine attachment. Positions 82 to 111 (AAKSGSSSGAGFAPVAGAGSLAAIAGLLLL) are cleaved as a propeptide — removed in mature form.

In terms of processing, the GPI-anchor is attached to the protein in the endoplasmic reticulum and serves to target the protein to the cell surface. There, the glucosamine-inositol phospholipid moiety is cleaved off and the GPI-modified mannoprotein is covalently attached via its lipidless GPI glycan remnant to the 1,6-beta-glucan of the outer cell wall layer.

Its subcellular location is the secreted. The protein resides in the cell wall. The protein localises to the membrane. In terms of biological role, probable cell wall protein required for filamentation at low pH. The chain is Repressed By RIM101 protein 1 (RBR1) from Candida albicans (strain SC5314 / ATCC MYA-2876) (Yeast).